The chain runs to 560 residues: 2-succinyl-5-enolpyruvyl-6-hydroxy-3-cyclohexene-1-carboxylate synthase (560 aa).

It belongs to the TPP enzyme family. MenD subfamily. As to quaternary structure, homodimer. Mg(2+) is required as a cofactor. Mn(2+) serves as cofactor. The cofactor is thiamine diphosphate.

The enzyme catalyses isochorismate + 2-oxoglutarate + H(+) = 5-enolpyruvoyl-6-hydroxy-2-succinyl-cyclohex-3-ene-1-carboxylate + CO2. The protein operates within quinol/quinone metabolism; 1,4-dihydroxy-2-naphthoate biosynthesis; 1,4-dihydroxy-2-naphthoate from chorismate: step 2/7. It participates in quinol/quinone metabolism; menaquinone biosynthesis. In terms of biological role, catalyzes the thiamine diphosphate-dependent decarboxylation of 2-oxoglutarate and the subsequent addition of the resulting succinic semialdehyde-thiamine pyrophosphate anion to isochorismate to yield 2-succinyl-5-enolpyruvyl-6-hydroxy-3-cyclohexene-1-carboxylate (SEPHCHC). This chain is 2-succinyl-5-enolpyruvyl-6-hydroxy-3-cyclohexene-1-carboxylate synthase, found in Lactococcus lactis subsp. lactis (strain IL1403) (Streptococcus lactis).